Reading from the N-terminus, the 285-residue chain is Diphthine methyl ester synthase (285 aa).

Residues leucine 9, aspartate 84, glycine 87, 112 to 113 (SI), and leucine 163 each bind S-adenosyl-L-methionine. At serine 171 the chain carries Phosphoserine. Valine 225 and histidine 250 together coordinate S-adenosyl-L-methionine.

It belongs to the diphthine synthase family.

It catalyses the reaction 2-[(3S)-amino-3-carboxypropyl]-L-histidyl-[translation elongation factor 2] + 4 S-adenosyl-L-methionine = diphthine methyl ester-[translation elongation factor 2] + 4 S-adenosyl-L-homocysteine + 3 H(+). The protein operates within protein modification; peptidyl-diphthamide biosynthesis. In terms of biological role, S-adenosyl-L-methionine-dependent methyltransferase that catalyzes four methylations of the modified target histidine residue in translation elongation factor 2 (EF-2), to form an intermediate called diphthine methyl ester. The four successive methylation reactions represent the second step of diphthamide biosynthesis. The sequence is that of Diphthine methyl ester synthase (DPH5) from Bos taurus (Bovine).